A 416-amino-acid polypeptide reads, in one-letter code: Adenylosuccinate synthetase (416 aa).

GTP contacts are provided by residues 13–19 (GDEGKGK) and 41–43 (GHT). Aspartate 14 acts as the Proton acceptor in catalysis. Aspartate 14 and glycine 41 together coordinate Mg(2+). Residues 14–17 (DEGK), 39–42 (NAGH), threonine 126, arginine 140, glutamine 220, threonine 235, and arginine 299 contribute to the IMP site. Histidine 42 functions as the Proton donor in the catalytic mechanism. A substrate-binding site is contributed by 295-301 (TTTGRKR). Residues arginine 301, 327–329 (KLD), and 405–407 (STS) each bind GTP.

Belongs to the adenylosuccinate synthetase family. As to quaternary structure, homodimer. The cofactor is Mg(2+).

The protein resides in the cytoplasm. The enzyme catalyses IMP + L-aspartate + GTP = N(6)-(1,2-dicarboxyethyl)-AMP + GDP + phosphate + 2 H(+). Its pathway is purine metabolism; AMP biosynthesis via de novo pathway; AMP from IMP: step 1/2. In terms of biological role, plays an important role in the de novo pathway of purine nucleotide biosynthesis. Catalyzes the first committed step in the biosynthesis of AMP from IMP. This Campylobacter fetus subsp. fetus (strain 82-40) protein is Adenylosuccinate synthetase.